The following is a 367-amino-acid chain: Sigma54-dependent transcriptional regulator SfnR (367 aa).

The region spanning 21-250 (QVFEDPKSQA…LENVIHHTLL (230 aa)) is the Sigma-54 factor interaction domain. ATP is bound by residues 49-56 (GETGTGKE) and 112-121 (ADGGTLFLDE).

Its function is as follows. Involved in the dimethyl sulfide degradation pathway. Activates the expression of sfnG and sfnF. In Pseudomonas fluorescens (strain Pf0-1), this protein is Sigma54-dependent transcriptional regulator SfnR.